The chain runs to 477 residues: Protein nucleotidyltransferase YdiU (477 aa).

ATP-binding residues include glycine 89, glycine 91, arginine 92, lysine 112, aspartate 124, glycine 125, arginine 178, and arginine 185. Aspartate 257 (proton acceptor) is an active-site residue. Mg(2+) contacts are provided by asparagine 258 and aspartate 267. Aspartate 267 serves as a coordination point for ATP.

It belongs to the SELO family. It depends on Mg(2+) as a cofactor. Mn(2+) serves as cofactor.

The catalysed reaction is L-seryl-[protein] + ATP = 3-O-(5'-adenylyl)-L-seryl-[protein] + diphosphate. The enzyme catalyses L-threonyl-[protein] + ATP = 3-O-(5'-adenylyl)-L-threonyl-[protein] + diphosphate. It catalyses the reaction L-tyrosyl-[protein] + ATP = O-(5'-adenylyl)-L-tyrosyl-[protein] + diphosphate. It carries out the reaction L-histidyl-[protein] + UTP = N(tele)-(5'-uridylyl)-L-histidyl-[protein] + diphosphate. The catalysed reaction is L-seryl-[protein] + UTP = O-(5'-uridylyl)-L-seryl-[protein] + diphosphate. The enzyme catalyses L-tyrosyl-[protein] + UTP = O-(5'-uridylyl)-L-tyrosyl-[protein] + diphosphate. In terms of biological role, nucleotidyltransferase involved in the post-translational modification of proteins. It can catalyze the addition of adenosine monophosphate (AMP) or uridine monophosphate (UMP) to a protein, resulting in modifications known as AMPylation and UMPylation. The chain is Protein nucleotidyltransferase YdiU from Synechocystis sp. (strain ATCC 27184 / PCC 6803 / Kazusa).